We begin with the raw amino-acid sequence, 203 residues long: MHKAPESVLNALVPMVVEQTAKGERSYDIYSRLLKERVIFLVGQVEEHMANLIVAQLLFLESESPDKDIYLYINSPGGSVTAGMAIYDTMQFIKPNVSTVCIGQAASMGAFLLAGGAEGKRHCLPNSRVMIHQPLGGFQGQASDIAIHAQEILGIKNKLNTMLAEHTGQPLEVIERDTDRDNFMSATEAAEYGLVDSVIAKRS.

Ser-107 acts as the Nucleophile in catalysis. The active site involves His-132.

This sequence belongs to the peptidase S14 family. In terms of assembly, fourteen ClpP subunits assemble into 2 heptameric rings which stack back to back to give a disk-like structure with a central cavity, resembling the structure of eukaryotic proteasomes.

It localises to the cytoplasm. It catalyses the reaction Hydrolysis of proteins to small peptides in the presence of ATP and magnesium. alpha-casein is the usual test substrate. In the absence of ATP, only oligopeptides shorter than five residues are hydrolyzed (such as succinyl-Leu-Tyr-|-NHMec, and Leu-Tyr-Leu-|-Tyr-Trp, in which cleavage of the -Tyr-|-Leu- and -Tyr-|-Trp bonds also occurs).. In terms of biological role, cleaves peptides in various proteins in a process that requires ATP hydrolysis. Has a chymotrypsin-like activity. Plays a major role in the degradation of misfolded proteins. In Shewanella halifaxensis (strain HAW-EB4), this protein is ATP-dependent Clp protease proteolytic subunit.